Here is a 337-residue protein sequence, read N- to C-terminus: Putative 2-aminoethylphosphonate-binding periplasmic protein (337 aa).

The signal sequence occupies residues 1-21; it reads MKLSRLALLSVFALASAPSWA.

Belongs to the bacterial solute-binding protein 1 family.

The protein localises to the periplasm. Its function is as follows. Probably part of the PhnSTUV complex (TC 3.A.1.11.5) involved in 2-aminoethylphosphonate import. The sequence is that of Putative 2-aminoethylphosphonate-binding periplasmic protein (phnS) from Salmonella typhimurium (strain LT2 / SGSC1412 / ATCC 700720).